The primary structure comprises 1019 residues: MPRSSATARKSHSNRHENGSANTGKKVAKQKSNGHLNVNLNGGSASSSLSSSQVDLPSSRSSSDPVVPTTTAASTKLNGTPDSSKGDCNAPDHLNGYAKGNADMSYVQNDGVASQTGGDVAGPASRRTEKSATGSKRSPSNASVNPLQLASTILKSCPMYDTIAILIFLLQLPPMVLTLVQFLFASLTFLPPSGASAGSLTSNFDIFQGPAGTPSLGTMIAMDGFCLLIWGLFMWTWAQNFALDLAHVQVAITLGGGGFGKNGGVNTLCVGIVLIMHLVRSKGIQDFVIGHLLSSNIISPDMLSQYSHLLPTEFRRTEPQTSPSWLRSLLAVHILAQAGTAMARRSMAKNRTPNPPRTGKRIDTEASAGSQTQIDSAFESGASVSSYIGADGQIVTSAAHKDGRDRLLSAKKRRRQANQVRSRQPFWAALASTKITVMREYEHSRALSKTARSLPMTEDDLQGLSLDDGLVWITEIDSSTIKFAAGDFSSADDSSGSGACEAGCLGSEDMEPFYVCVNGALWATATICKVHDAPKGSSMVHWRGEISGLAPNCAYTCSFVRSDTDEEICVISVKTPANNDAEQVSSVSTPPHPSYRPSSPTTTLKNSIVNAEAKLNEKRSRLRKAKNDHKLIISKIRKELDNYNHRLHSGTDENRQKQRSLQLERNIRQTEEATALLEDQLDNLENVPEEELRKWSDQKAKYEHELGLLNSAKEELASARSAIAREVSSLETELSSAIQRRERLQSRRTRINEQYERIVSANAQGLNERERRAAEQFAREQDQAKLEATFNEQFATIGQSVQEYQLRAQQIWQQCDAIEQAIQQQHQQMLLDPGPLTPEGNLPGTNPFSESALPLGALTSTAPSSRSLLGLSFPPLKSSPLQTASSPVGASSSHPTSPVQQPSYLNFPTSPLVNASSHLDSDFVYRHRSFSNRSARSSLYGSDFMDSSRRQPFQLDLSELLADKRSPGSDSNTALNSGLRPVSSPFQRAGSRGSGSGSNGSGGSGSGSGSPSSVYGKTN.

Disordered stretches follow at residues 1-94 (MPRS…PDHL) and 109-143 (NDGV…SNAS). Residues 30–43 (QKSNGHLNVNLNGG) show a composition bias toward polar residues. The span at 44–66 (SASSSLSSSQVDLPSSRSSSDPV) shows a compositional bias: low complexity. 2 stretches are compositionally biased toward polar residues: residues 68–83 (PTTT…TPDS) and 131–143 (SATG…SNAS). 3 helical membrane-spanning segments follow: residues 163-183 (IAIL…VQFL), 216-236 (LGTM…FMWT), and 259-279 (FGKN…MHLV). 5 disordered regions span residues 343 to 371 (ARRS…AGSQ), 580 to 603 (DAEQ…PTTT), 831 to 855 (LDPG…ALPL), 879 to 905 (SPLQ…PSYL), and 963 to 1019 (DKRS…GKTN). Residues 580–589 (DAEQVSSVST) show a composition bias toward polar residues. The stretch at 602–788 (TTLKNSIVNA…REQDQAKLEA (187 aa)) forms a coiled coil. A compositionally biased stretch (gly residues) spans 992 to 1008 (RGSGSGSNGSGGSGSGS).

Belongs to the acrB family.

It is found in the membrane. Component of the regulatory network controlling carbon source utilization through ubiquitination and deubiquitination involving creA, creB, creC, creD and acrB. Involved in resistance to acriflavine, and required for normal growth on a range of sole carbon sources, including fructose, cellobiose, raffinose, and starch, and reduced utilization of amino acids, including GABA and beta-alanine, as sole carbon and nitrogen sources. The protein is Probable ubiquitination network signaling protein acrB (acrB) of Aspergillus fumigatus (strain ATCC MYA-4609 / CBS 101355 / FGSC A1100 / Af293) (Neosartorya fumigata).